Consider the following 400-residue polypeptide: Argininosuccinate synthase (400 aa).

Residues 10–18 (AYSGGVDTS) and Ala38 each bind ATP. Tyr89 is a binding site for L-citrulline. Gly119 is a binding site for ATP. L-aspartate contacts are provided by Thr121, Asn125, and Asp126. Residue Asn125 coordinates L-citrulline. Arg129, Ser177, Ser186, Glu262, and Tyr274 together coordinate L-citrulline.

It belongs to the argininosuccinate synthase family. Type 1 subfamily. Homotetramer.

It localises to the cytoplasm. The catalysed reaction is L-citrulline + L-aspartate + ATP = 2-(N(omega)-L-arginino)succinate + AMP + diphosphate + H(+). The protein operates within amino-acid biosynthesis; L-arginine biosynthesis; L-arginine from L-ornithine and carbamoyl phosphate: step 2/3. The polypeptide is Argininosuccinate synthase (Nostoc punctiforme (strain ATCC 29133 / PCC 73102)).